We begin with the raw amino-acid sequence, 539 residues long: Protein peanut (539 aa).

Phosphoserine occurs at positions 6 and 13. Residues 29–90 (LRDKQQAASA…GASNGDSNKL (62 aa)) are disordered. The segment covering 35–54 (AASASASSATNGSSGSESLV) has biased composition (low complexity). Residues 139-411 (RGFEFTLMVV…ENYRCRKLSE (273 aa)) enclose the Septin-type G domain. A G1 motif region spans residues 149–156 (GASGLGKS). GTP is bound by residues 149 to 156 (GASGLGKS), Thr183, Gly209, 288 to 296 (KADTMTPDE), Gly345, and Arg360. Positions 206-209 (DTPG) are G3 motif. The tract at residues 287–290 (AKAD) is G4 motif. Residues 420 to 516 (RLSNKNPLTQ…HVTLEELKRR (97 aa)) adopt a coiled-coil conformation. The interval 513-539 (LKRRSLGANSSTDNVDGKKEKKKKGLF) is disordered. Position 517 is a phosphoserine (Ser517).

This sequence belongs to the TRAFAC class TrmE-Era-EngA-EngB-Septin-like GTPase superfamily. Septin GTPase family. In terms of assembly, likely part of a multicomponent septin complex that includes Septin1. Interacts with Septin1. Interacts with hil. Interacts with park. Ubiquitinated by park, leading to its degradation by the proteasome. Accumulates at the leading edge of the cleavage furrow in dividing cells and cellularizing embryos (at protein level).

It localises to the apical cell membrane. The protein localises to the cleavage furrow. It is found in the cytoplasm. Its subcellular location is the cell cortex. Involved in cytokinesis and possibly cellularization. Also acts as an enhancer of the sina gene, thus having a role in photoreceptor development. May be involved in p53-dependent apoptosis. The protein is Protein peanut (pnut) of Drosophila melanogaster (Fruit fly).